Reading from the N-terminus, the 316-residue chain is 4-hydroxy-3-methylbut-2-enyl diphosphate reductase (316 aa).

Cys12 lines the [4Fe-4S] cluster pocket. His41 and His74 together coordinate (2E)-4-hydroxy-3-methylbut-2-enyl diphosphate. Residues His41 and His74 each contribute to the dimethylallyl diphosphate site. Isopentenyl diphosphate-binding residues include His41 and His74. Position 96 (Cys96) interacts with [4Fe-4S] cluster. His124 provides a ligand contact to (2E)-4-hydroxy-3-methylbut-2-enyl diphosphate. Position 124 (His124) interacts with dimethylallyl diphosphate. Position 124 (His124) interacts with isopentenyl diphosphate. Catalysis depends on Glu126, which acts as the Proton donor. Thr167 provides a ligand contact to (2E)-4-hydroxy-3-methylbut-2-enyl diphosphate. Cys197 serves as a coordination point for [4Fe-4S] cluster. Residues Ser225, Ser226, Asn227, and Ser269 each contribute to the (2E)-4-hydroxy-3-methylbut-2-enyl diphosphate site. The dimethylallyl diphosphate site is built by Ser225, Ser226, Asn227, and Ser269. Isopentenyl diphosphate contacts are provided by Ser225, Ser226, Asn227, and Ser269.

This sequence belongs to the IspH family. As to quaternary structure, homodimer. [4Fe-4S] cluster serves as cofactor.

The catalysed reaction is isopentenyl diphosphate + 2 oxidized [2Fe-2S]-[ferredoxin] + H2O = (2E)-4-hydroxy-3-methylbut-2-enyl diphosphate + 2 reduced [2Fe-2S]-[ferredoxin] + 2 H(+). The enzyme catalyses dimethylallyl diphosphate + 2 oxidized [2Fe-2S]-[ferredoxin] + H2O = (2E)-4-hydroxy-3-methylbut-2-enyl diphosphate + 2 reduced [2Fe-2S]-[ferredoxin] + 2 H(+). It functions in the pathway isoprenoid biosynthesis; dimethylallyl diphosphate biosynthesis; dimethylallyl diphosphate from (2E)-4-hydroxy-3-methylbutenyl diphosphate: step 1/1. It participates in isoprenoid biosynthesis; isopentenyl diphosphate biosynthesis via DXP pathway; isopentenyl diphosphate from 1-deoxy-D-xylulose 5-phosphate: step 6/6. Its function is as follows. Catalyzes the conversion of 1-hydroxy-2-methyl-2-(E)-butenyl 4-diphosphate (HMBPP) into a mixture of isopentenyl diphosphate (IPP) and dimethylallyl diphosphate (DMAPP). Acts in the terminal step of the DOXP/MEP pathway for isoprenoid precursor biosynthesis. This Cronobacter sakazakii (strain ATCC BAA-894) (Enterobacter sakazakii) protein is 4-hydroxy-3-methylbut-2-enyl diphosphate reductase.